Reading from the N-terminus, the 251-residue chain is MSLVNKRAVAAAFGRAAQSYDSHAQLQRQSADLLLAKLGERRPASVLDAGCGPGSMSRYWRDAGAEVTALDLSLPMLRQAQSQQAAQHYVAADIEALPLADARFDLAWSNLAVQWCNDLGQALKSLHRVVRPGGAVAFTTLASGSLPELHQAWQAVDSRLHANRFLAEETLAETVSAWRGQWGIEPVTLAFDDALAAMRSLKGIGATHLHAGRHNTPLTRGQLQRLQLAWPQQQGRCLLTYSLFWGVIERD.

The protein belongs to the methyltransferase superfamily.

The enzyme catalyses malonyl-[ACP] + S-adenosyl-L-methionine = malonyl-[ACP] methyl ester + S-adenosyl-L-homocysteine. Its pathway is cofactor biosynthesis; biotin biosynthesis. Converts the free carboxyl group of a malonyl-thioester to its methyl ester by transfer of a methyl group from S-adenosyl-L-methionine (SAM). It allows to synthesize pimeloyl-ACP via the fatty acid synthetic pathway. The protein is Malonyl-[acyl-carrier protein] O-methyltransferase of Pseudescherichia vulneris (Escherichia vulneris).